Consider the following 58-residue polypeptide: Large ribosomal subunit protein eL37 (58 aa).

4 residues coordinate Zn(2+): Cys-20, Cys-23, Cys-35, and Cys-38. The C4-type zinc-finger motif lies at 20–38 (CRRCGEKSYHVKKERCSSC). Residues 39–58 (GFGDSASRRGYAWQSKSGDN) form a disordered region.

The protein belongs to the eukaryotic ribosomal protein eL37 family. It depends on Zn(2+) as a cofactor.

In terms of biological role, binds to the 23S rRNA. The protein is Large ribosomal subunit protein eL37 of Halorubrum lacusprofundi (strain ATCC 49239 / DSM 5036 / JCM 8891 / ACAM 34).